The primary structure comprises 121 residues: Large ribosomal subunit protein bL12 (121 aa).

It belongs to the bacterial ribosomal protein bL12 family. As to quaternary structure, homodimer. Part of the ribosomal stalk of the 50S ribosomal subunit. Forms a multimeric L10(L12)X complex, where L10 forms an elongated spine to which 2 to 4 L12 dimers bind in a sequential fashion. Binds GTP-bound translation factors.

Its function is as follows. Forms part of the ribosomal stalk which helps the ribosome interact with GTP-bound translation factors. Is thus essential for accurate translation. This is Large ribosomal subunit protein bL12 from Streptococcus agalactiae serotype V (strain ATCC BAA-611 / 2603 V/R).